A 256-amino-acid polypeptide reads, in one-letter code: Rano class II histocompatibility antigen, B alpha chain (256 aa).

An N-terminal signal peptide occupies residues 1–23 (MPLSRALILGVLALTTMLSPCGG). An alpha-1 region spans residues 24-111 (QDDIEADHVG…KRSNSTPAVN (88 aa)). Over 24 to 218 (QDDIEADHVG…IPAPMSELTE (195 aa)) the chain is Extracellular. An Ig-like C1-type domain is found at 108–206 (PAVNEVPEAT…LDEPVLRHWE (99 aa)). Positions 112–205 (EVPEATVFSK…SLDEPVLRHW (94 aa)) are alpha-2. Cys134 and Cys190 are disulfide-bonded. Asn145 carries an N-linked (GlcNAc...) asparagine glycan. The connecting peptide stretch occupies residues 206-218 (EPEIPAPMSELTE). Residues 219-244 (TVVCALGLSVGLVGIVVGTIFIIQGL) traverse the membrane as a helical segment. Over 245–256 (RSVAPSRHPGPL) the chain is Cytoplasmic.

It belongs to the MHC class II family.

The protein localises to the membrane. The protein is Rano class II histocompatibility antigen, B alpha chain (RT1-Ba) of Rattus norvegicus (Rat).